A 610-amino-acid chain; its full sequence is Menin (610 aa).

The tract at residues 214 to 390 (GVAERSWLYL…SLLEAGEERP (177 aa)) is interaction with FANCD2. Residues 460–552 (REAEAAEAEE…SPPPEGPVLT (93 aa)) are disordered. Residues 484–500 (RRESKPEEPPPPKKPAL) show a composition bias toward basic and acidic residues. 2 positions are modified to phosphoserine: S487 and S543. T594 bears the Phosphothreonine mark.

In terms of assembly, component of the MLL-HCF complex, at least composed of KMT2A/MLL1, MEN1, ASH2L, RBBP5, DPY30, WDR5, HCFC1 and HCFC2. Component of the menin-associated histone methyltransferase complex, at least composed of KMT2B/MLL4, MEN1, ASH2L, RBBP5, DPY30 and WDR5. Interacts with POLR2B. Interacts with POLR2A phosphorylated at 'Ser-5', but not with the unphosphorylated, nor 'Ser-2' phosphorylated POLR2A forms. Interacts with FANCD2 and DBF4. Interacts with SMAD3, but not with SMAD2, nor SMAD4. Directly interacts with NFKB1, NFKB2 and RELA. Interacts with JUND (via MBM motif); inhibits the interaction of JUND with MAPK10 and the phosphorylation of JUND by MAP kinases MAPK8 and MAPK10. Interacts with KMT2A (via MBM motif). The KMT2A-MEN1 complex interacts with PSIP1 with a greater affinity as MEN1 enhances interaction of KMT2A with PSIP1. Widely expressed, including in the pituitary, brain, large intestine, spleen, kidney, adrenal gland, ovary, testis, thymus, lung, epididymis, bone marrow, pancreatic islets and placenta.

It is found in the nucleus. In terms of biological role, essential component of a MLL/SET1 histone methyltransferase (HMT) complex, a complex that specifically methylates 'Lys-4' of histone H3 (H3K4). Functions as a transcriptional regulator. Binds to the TERT promoter and represses telomerase expression. Represses JUND-mediated transcriptional activation on AP1 sites, as well as that mediated by NFKB subunit RELA. Positively regulates HOXC8 and HOXC6 gene expression. May be involved in normal hematopoiesis through the activation of HOXA9 expression. May be involved in DNA repair. Plays a role in TGFB1-mediated inhibition of cell-proliferation, possibly regulating SMAD3 transcriptional activity. The chain is Menin (Men1) from Rattus norvegicus (Rat).